A 66-amino-acid chain; its full sequence is Ribosome biogenesis protein Nop10 (66 aa).

This sequence belongs to the NOP10 family.

Functionally, involved in ribosome biogenesis; more specifically in 18S rRNA pseudouridylation and in cleavage of pre-rRNA. This is Ribosome biogenesis protein Nop10 from Desulfurococcus amylolyticus (strain DSM 18924 / JCM 16383 / VKM B-2413 / 1221n) (Desulfurococcus kamchatkensis).